Reading from the N-terminus, the 117-residue chain is G antigen 5 (117 aa).

The segment at 1-117 is disordered; that stretch reads MSWRGRSTYY…PEEGEKQSQC (117 aa). Acidic residues-rich tracts occupy residues 32-45 and 87-96; these read FSDEVEPATPEEGE and ECEDGPDGQE. The segment covering 103–117 has biased composition (basic and acidic residues); sequence EEVKTPEEGEKQSQC.

It belongs to the GAGE family. As to expression, expressed in a variety of tumor tissues but not in normal tissues, except testis.

The polypeptide is G antigen 5 (GAGE5) (Homo sapiens (Human)).